The following is a 433-amino-acid chain: PHO85 cyclin-10 (433 aa).

The segment covering 1–10 has biased composition (basic and acidic residues); that stretch reads MDMTKNHTTD. Disordered stretches follow at residues 1 to 20 and 51 to 81; these read MDMT…GDIR and LTSE…TTDS. Residues 51 to 63 are compositionally biased toward polar residues; sequence LTSEWDQSRSNTP.

It belongs to the cyclin family. PHO80 subfamily. As to quaternary structure, forms a cyclin-CDK complex with PHO85. Interacts with GSY2, independent of the presence of PHO85.

It is found in the cytoplasm. Cyclin partner of the cyclin-dependent kinase (CDK) PHO85. Together with cyclin PCL8, negatively controls glycogen accumulation under favorable growth conditions. The PCL10-PHO85 cyclin-CDK holoenzyme has glycogen synthase kinase activity and phosphorylates and negatively regulates glycogen synthase GSY2. Also has minor GLC8 kinase activity. The chain is PHO85 cyclin-10 (PCL10) from Saccharomyces cerevisiae (strain ATCC 204508 / S288c) (Baker's yeast).